Consider the following 90-residue polypeptide: Small ribosomal subunit protein uS15c (90 aa).

It belongs to the universal ribosomal protein uS15 family. In terms of assembly, part of the 30S ribosomal subunit.

The protein resides in the plastid. It is found in the chloroplast. The protein is Small ribosomal subunit protein uS15c (rps15) of Manihot esculenta (Cassava).